The chain runs to 140 residues: MAAMTYHLDVVSAEKKMFSGVVQKIQVTGSEGELGIFPGHAPLLTAIKPGMIRIVKQFGEEEFIYLSGGILEVQPSVVIVLADTAIRGLDLDEARALESKRKAEAHINNSHGDVDYAQASAELAKAIAKLRVIELTKKAM.

This sequence belongs to the ATPase epsilon chain family. F-type ATPases have 2 components, CF(1) - the catalytic core - and CF(0) - the membrane proton channel. CF(1) has five subunits: alpha(3), beta(3), gamma(1), delta(1), epsilon(1). CF(0) has three main subunits: a, b and c.

Its subcellular location is the cell inner membrane. Functionally, produces ATP from ADP in the presence of a proton gradient across the membrane. The protein is ATP synthase epsilon chain of Yersinia pseudotuberculosis serotype O:1b (strain IP 31758).